A 540-amino-acid polypeptide reads, in one-letter code: CTP synthase (540 aa).

Residues 1 to 265 (MVRFIFITGG…DNKVLKFFNL (265 aa)) form an amidoligase domain region. CTP is bound at residue Ser-13. Ser-13 contacts UTP. Residues 14-19 (SLGKGL) and Asp-71 contribute to the ATP site. Asp-71 and Glu-139 together coordinate Mg(2+). Residues 146-148 (DIE), 186-191 (KTKPTQ), and Lys-222 each bind CTP. Residues 186–191 (KTKPTQ) and Lys-222 each bind UTP. Positions 290–539 (RIAIIAKYHK…VEAAIKYNKN (250 aa)) constitute a Glutamine amidotransferase type-1 domain. Gly-352 provides a ligand contact to L-glutamine. Cys-379 acts as the Nucleophile; for glutamine hydrolysis in catalysis. Residues 380 to 383 (LGMQ), Glu-403, and Arg-467 contribute to the L-glutamine site. Catalysis depends on residues His-512 and Glu-514.

This sequence belongs to the CTP synthase family. Homotetramer.

It catalyses the reaction UTP + L-glutamine + ATP + H2O = CTP + L-glutamate + ADP + phosphate + 2 H(+). It carries out the reaction L-glutamine + H2O = L-glutamate + NH4(+). The enzyme catalyses UTP + NH4(+) + ATP = CTP + ADP + phosphate + 2 H(+). Its pathway is pyrimidine metabolism; CTP biosynthesis via de novo pathway; CTP from UDP: step 2/2. Allosterically activated by GTP, when glutamine is the substrate; GTP has no effect on the reaction when ammonia is the substrate. The allosteric effector GTP functions by stabilizing the protein conformation that binds the tetrahedral intermediate(s) formed during glutamine hydrolysis. Inhibited by the product CTP, via allosteric rather than competitive inhibition. In terms of biological role, catalyzes the ATP-dependent amination of UTP to CTP with either L-glutamine or ammonia as the source of nitrogen. Regulates intracellular CTP levels through interactions with the four ribonucleotide triphosphates. This Rickettsia bellii (strain RML369-C) protein is CTP synthase.